The following is a 393-amino-acid chain: Epoxyqueuosine reductase (393 aa).

Catalysis depends on Asp154, which acts as the Proton donor. The 4Fe-4S ferredoxin-type domain occupies 196–228 (LPLPVDIPVQEGCHSCVACITSCPTGAIVEPYT). Residues Cys208, Cys211, Cys214, Cys218, Cys234, Cys261, Cys264, and Cys268 each contribute to the [4Fe-4S] cluster site.

The protein belongs to the QueG family. Monomer. The cofactor is cob(II)alamin. Requires [4Fe-4S] cluster as cofactor.

The protein localises to the cytoplasm. The enzyme catalyses epoxyqueuosine(34) in tRNA + AH2 = queuosine(34) in tRNA + A + H2O. Its pathway is tRNA modification; tRNA-queuosine biosynthesis. Catalyzes the conversion of epoxyqueuosine (oQ) to queuosine (Q), which is a hypermodified base found in the wobble positions of tRNA(Asp), tRNA(Asn), tRNA(His) and tRNA(Tyr). This is Epoxyqueuosine reductase from Shewanella oneidensis (strain ATCC 700550 / JCM 31522 / CIP 106686 / LMG 19005 / NCIMB 14063 / MR-1).